The primary structure comprises 235 residues: Fibrillarin-like rRNA/tRNA 2'-O-methyltransferase (235 aa).

S-adenosyl-L-methionine is bound by residues 91-92 (TT), 110-111 (EF), 137-138 (DA), and 157-160 (DVAQ).

Belongs to the methyltransferase superfamily. Fibrillarin family. Interacts with nop5. Component of box C/D small ribonucleoprotein (sRNP) particles that contain rpl7ae, FlpA and nop5, plus a guide RNA.

Its function is as follows. Involved in pre-rRNA and tRNA processing. Utilizes the methyl donor S-adenosyl-L-methionine to catalyze the site-specific 2'-hydroxyl methylation of ribose moieties in rRNA and tRNA. Site specificity is provided by a guide RNA that base pairs with the substrate. Methylation occurs at a characteristic distance from the sequence involved in base pairing with the guide RNA. This chain is Fibrillarin-like rRNA/tRNA 2'-O-methyltransferase, found in Pyrobaculum neutrophilum (strain DSM 2338 / JCM 9278 / NBRC 100436 / V24Sta) (Thermoproteus neutrophilus).